The primary structure comprises 187 residues: Ribosome maturation factor RimM (187 aa).

Residues 96–169 form the PRC barrel domain; it reads EDEFFYADLE…KLVIDPTAAG (74 aa).

It belongs to the RimM family. Binds ribosomal protein uS19.

The protein localises to the cytoplasm. Its function is as follows. An accessory protein needed during the final step in the assembly of 30S ribosomal subunit, possibly for assembly of the head region. Essential for efficient processing of 16S rRNA. May be needed both before and after RbfA during the maturation of 16S rRNA. It has affinity for free ribosomal 30S subunits but not for 70S ribosomes. The polypeptide is Ribosome maturation factor RimM (Sinorhizobium medicae (strain WSM419) (Ensifer medicae)).